Reading from the N-terminus, the 238-residue chain is MSDKKRVLVKFSGEALAGDSGFGIDTAILKFIADEIKELVTNGTEVCIVIGGGNIIRGVSAAKDGIIRRTSGDHMGMLATVINSIAMREALERGGLDVRVQSAIKMEAICETFIVGRANRHLEKGRVVIFAAGTGNPFFTTDTAATLRAIEIGSDMIIKATKVDGVYDKDPNKFKDAKLLKSLSYEKAMSDDIKVMDDTAIALAKDNSLPILVCNMFKQGNLLKIISEDAKALYSIVK.

10–13 contacts ATP; it reads KFSG. An involved in allosteric activation by GTP region spans residues 18 to 23; it reads GDSGFG. A UMP-binding site is contributed by Gly52. The ATP site is built by Gly53 and Arg57. UMP-binding positions include Asp73 and 134–141; that span reads TGNPFFTT. The ATP site is built by Thr161, Tyr167, and Asp170.

It belongs to the UMP kinase family. As to quaternary structure, homohexamer.

It localises to the cytoplasm. It catalyses the reaction UMP + ATP = UDP + ADP. The protein operates within pyrimidine metabolism; CTP biosynthesis via de novo pathway; UDP from UMP (UMPK route): step 1/1. Its activity is regulated as follows. Allosterically activated by GTP. Inhibited by UTP. In terms of biological role, catalyzes the reversible phosphorylation of UMP to UDP. In Campylobacter curvus (strain 525.92), this protein is Uridylate kinase.